We begin with the raw amino-acid sequence, 450 residues long: Phosphoglucosamine mutase (450 aa).

S97 (phosphoserine intermediate) is an active-site residue. Mg(2+) is bound by residues S97, D236, D238, and D240. The residue at position 97 (S97) is a Phosphoserine.

It belongs to the phosphohexose mutase family. The cofactor is Mg(2+). Activated by phosphorylation.

It catalyses the reaction alpha-D-glucosamine 1-phosphate = D-glucosamine 6-phosphate. Catalyzes the conversion of glucosamine-6-phosphate to glucosamine-1-phosphate. The sequence is that of Phosphoglucosamine mutase from Prochlorococcus marinus (strain MIT 9215).